We begin with the raw amino-acid sequence, 137 residues long: Peptide methionine sulfoxide reductase MsrB (137 aa).

The MsrB domain maps to 7–129; the sequence is PEELKNGLSE…NSASLSFTDE (123 aa). Zn(2+)-binding residues include Cys-46, Cys-49, Cys-95, and Cys-98. Cys-118 serves as the catalytic Nucleophile.

Belongs to the MsrB Met sulfoxide reductase family. Zn(2+) is required as a cofactor.

It carries out the reaction L-methionyl-[protein] + [thioredoxin]-disulfide + H2O = L-methionyl-(R)-S-oxide-[protein] + [thioredoxin]-dithiol. In Klebsiella pneumoniae subsp. pneumoniae (strain ATCC 700721 / MGH 78578), this protein is Peptide methionine sulfoxide reductase MsrB.